The sequence spans 146 residues: Deoxyuridine 5'-triphosphate nucleotidohydrolase (146 aa).

Substrate is bound by residues 65 to 67 (RSG), asparagine 78, and 82 to 84 (TID).

The protein belongs to the dUTPase family. Requires Mg(2+) as cofactor.

The catalysed reaction is dUTP + H2O = dUMP + diphosphate + H(+). It functions in the pathway pyrimidine metabolism; dUMP biosynthesis; dUMP from dCTP (dUTP route): step 2/2. Functionally, this enzyme is involved in nucleotide metabolism: it produces dUMP, the immediate precursor of thymidine nucleotides and it decreases the intracellular concentration of dUTP so that uracil cannot be incorporated into DNA. This chain is Deoxyuridine 5'-triphosphate nucleotidohydrolase, found in Treponema pallidum subsp. pallidum (strain SS14).